The chain runs to 578 residues: NADH-quinone oxidoreductase subunit C/D (578 aa).

An NADH dehydrogenase I subunit C region spans residues 1-167 (MILSLFKLFG…DEFYFTKQKE (167 aa)). Positions 192 to 578 (EYMFLNFGPN…IDFVMSDVDR (387 aa)) are NADH dehydrogenase I subunit D.

It in the N-terminal section; belongs to the complex I 30 kDa subunit family. In the C-terminal section; belongs to the complex I 49 kDa subunit family. NDH-1 is composed of 13 different subunits. Subunits NuoB, CD, E, F, and G constitute the peripheral sector of the complex.

The protein resides in the cell inner membrane. It carries out the reaction a quinone + NADH + 5 H(+)(in) = a quinol + NAD(+) + 4 H(+)(out). Its function is as follows. NDH-1 shuttles electrons from NADH, via FMN and iron-sulfur (Fe-S) centers, to quinones in the respiratory chain. The immediate electron acceptor for the enzyme in this species is believed to be ubiquinone. Couples the redox reaction to proton translocation (for every two electrons transferred, four hydrogen ions are translocated across the cytoplasmic membrane), and thus conserves the redox energy in a proton gradient. The polypeptide is NADH-quinone oxidoreductase subunit C/D (Buchnera aphidicola subsp. Cinara cedri (strain Cc)).